A 374-amino-acid chain; its full sequence is Pectate lyase 1 (374 aa).

The N-terminal stretch at 1–21 is a signal peptide; that stretch reads MDSPCLVALLVFSFVIGSCFS. 2 disulfides stabilise this stretch: cysteine 28–cysteine 45 and cysteine 128–cysteine 147. N-linked (GlcNAc...) asparagine glycosylation is present at asparagine 158. Ca(2+) is bound at residue aspartate 170. Asparagine 191 carries N-linked (GlcNAc...) (complex) asparagine glycosylation. The Ca(2+) site is built by aspartate 194 and aspartate 198. Arginine 250 is an active-site residue. Residue asparagine 293 is glycosylated (N-linked (GlcNAc...) asparagine). Residues cysteine 306 and cysteine 312 are joined by a disulfide bond. Asparagine 354 carries N-linked (GlcNAc...) (complex) asparagine glycosylation.

This sequence belongs to the polysaccharide lyase 1 family. Amb a subfamily. Ca(2+) is required as a cofactor. N-glycosylated; contains fucose and xylose.

The catalysed reaction is Eliminative cleavage of (1-&gt;4)-alpha-D-galacturonan to give oligosaccharides with 4-deoxy-alpha-D-galact-4-enuronosyl groups at their non-reducing ends.. Its pathway is glycan metabolism; pectin degradation; 2-dehydro-3-deoxy-D-gluconate from pectin: step 2/5. Functionally, has pectate lyase activity. The chain is Pectate lyase 1 from Cryptomeria japonica (Japanese cedar).